Reading from the N-terminus, the 440-residue chain is D-serine dehydratase (440 aa).

The residue at position 116 (K116) is an N6-(pyridoxal phosphate)lysine.

It belongs to the serine/threonine dehydratase family. DsdA subfamily. In terms of assembly, monomer. Pyridoxal 5'-phosphate serves as cofactor.

It catalyses the reaction D-serine = pyruvate + NH4(+). The protein is D-serine dehydratase of Salmonella choleraesuis (strain SC-B67).